A 369-amino-acid chain; its full sequence is Ribosomal RNA large subunit methyltransferase M (369 aa).

Residues Ser-198, 231–234 (APGG), Asp-250, Asp-270, and Asp-287 contribute to the S-adenosyl-L-methionine site. Lys-316 serves as the catalytic Proton acceptor.

It belongs to the class I-like SAM-binding methyltransferase superfamily. RNA methyltransferase RlmE family. RlmM subfamily. Monomer.

It is found in the cytoplasm. The catalysed reaction is cytidine(2498) in 23S rRNA + S-adenosyl-L-methionine = 2'-O-methylcytidine(2498) in 23S rRNA + S-adenosyl-L-homocysteine + H(+). Catalyzes the 2'-O-methylation at nucleotide C2498 in 23S rRNA. This chain is Ribosomal RNA large subunit methyltransferase M, found in Idiomarina loihiensis (strain ATCC BAA-735 / DSM 15497 / L2-TR).